Reading from the N-terminus, the 618-residue chain is UvrABC system protein C (618 aa).

Residues 13-92 (DKPGVYLMKN…IKKYRPKYNI (80 aa)) form the GIY-YIG domain. The UVR domain occupies 204–239 (LDIVENFKLNMEKAAGNLEFEKAAMLRDKINIIEKI).

This sequence belongs to the UvrC family. As to quaternary structure, interacts with UvrB in an incision complex.

It localises to the cytoplasm. In terms of biological role, the UvrABC repair system catalyzes the recognition and processing of DNA lesions. UvrC both incises the 5' and 3' sides of the lesion. The N-terminal half is responsible for the 3' incision and the C-terminal half is responsible for the 5' incision. The protein is UvrABC system protein C of Clostridium botulinum (strain 657 / Type Ba4).